The primary structure comprises 274 residues: NADPH-dependent 7-cyano-7-deazaguanine reductase (274 aa).

Residue 80–82 participates in substrate binding; that stretch reads VES. Residue 82–83 coordinates NADPH; that stretch reads SK. The Thioimide intermediate role is filled by cysteine 181. The active-site Proton donor is the aspartate 188. Substrate is bound at residue 220–221; sequence HE. An NADPH-binding site is contributed by 249–250; it reads RG.

Belongs to the GTP cyclohydrolase I family. QueF type 2 subfamily. Homodimer.

The protein localises to the cytoplasm. It carries out the reaction 7-aminomethyl-7-carbaguanine + 2 NADP(+) = 7-cyano-7-deazaguanine + 2 NADPH + 3 H(+). It participates in tRNA modification; tRNA-queuosine biosynthesis. In terms of biological role, catalyzes the NADPH-dependent reduction of 7-cyano-7-deazaguanine (preQ0) to 7-aminomethyl-7-deazaguanine (preQ1). The sequence is that of NADPH-dependent 7-cyano-7-deazaguanine reductase from Burkholderia pseudomallei (strain 1106a).